Consider the following 300-residue polypeptide: MAATRVLTAATAVTQTTSCFLAKQAFTLPAKKSCGGFGGLCFSRRALVLKSKRPFSCSAIYNPQVKVQEEGPAESLDYRVFFLDGSGKKVSPWHDIPLTLGDGVFNFIVEIPKESKAKMEVATDEDFTPIKQDTKKGKLRYYPYNINWNYGLLPQTWEDPSHANSEVEGCFGDNDPVDVVEIGETQRKIGDILKIKPLAALAMIDEGELDWKIVAISLDDPKAHLVNDVEDVEKHFPGTLTAIRDWFRDYKIPDGKPANRFGLGDKPANKDYALKIIQETNESWAKLVKRSVDAGDLSLY.

A chloroplast-targeting transit peptide spans 1 to 66; sequence MAATRVLTAA…CSAIYNPQVK (66 aa). Residue R140 participates in diphosphate binding. The active-site Proton donor is the Y142. Residues D173, D178, and D210 each contribute to the Mg(2+) site.

The protein belongs to the PPase family. Requires Mg(2+) as cofactor. In terms of tissue distribution, expressed in all tissues tested. Highest expression in flowers, leaves and roots. Lower levels of expression in siliques, stems, ovary, stigma and pollen.

It is found in the plastid. The protein localises to the chloroplast stroma. It catalyses the reaction diphosphate + H2O = 2 phosphate + H(+). With respect to regulation, inhibited by NaF. The chain is Soluble inorganic pyrophosphatase 6, chloroplastic from Arabidopsis thaliana (Mouse-ear cress).